A 1088-amino-acid polypeptide reads, in one-letter code: RNA-directed RNA polymerase (1088 aa).

A RdRp catalytic domain is found at 501–687 (LSYGDVTRFL…AKRYIAGGKI (187 aa)).

Belongs to the reoviridae RNA-directed RNA polymerase family. In terms of assembly, interacts with VP3 (Potential). Interacts with VP2; this interaction activates VP1. Interacts with NSP5; this interaction is probably necessary for the formation of functional virus factories. Interacts with NSP2; this interaction is weak. Mg(2+) is required as a cofactor.

Its subcellular location is the virion. It catalyses the reaction RNA(n) + a ribonucleoside 5'-triphosphate = RNA(n+1) + diphosphate. Its function is as follows. RNA-directed RNA polymerase that is involved in both transcription and genome replication. Together with VP3 capping enzyme, forms an enzyme complex positioned near the channels situated at each of the five-fold vertices of the core. Following infection, the outermost layer of the virus is lost, leaving a double-layered particle (DLP) made up of the core and VP6 shell. VP1 then catalyzes the transcription of fully conservative plus-strand genomic RNAs that are extruded through the DLP's channels into the cytoplasm where they function as mRNAs for translation of viral proteins. One copy of each of the viral (+)RNAs is also recruited during core assembly, together with newly synthesized polymerase complexes and VP2. The polymerase of these novo-formed particles catalyzes the synthesis of complementary minus-strands leading to dsRNA formation. To do so, the polymerase specifically recognizes and binds 4 bases 5'-UGUG-3' in the conserved 3'-sequence of plus-strand RNA templates. VP2 presumably activates the autoinhibited VP1-RNA complex to coordinate packaging and genome replication. Once dsRNA synthesis is complete, the polymerase switches to the transcriptional mode, thus providing secondary transcription. In Bos taurus (Bovine), this protein is RNA-directed RNA polymerase.